Consider the following 444-residue polypeptide: UDP-N-acetylmuramate--L-alanine ligase (444 aa).

Residue 110-116 (GAHGKTS) participates in ATP binding.

The protein belongs to the MurCDEF family.

It is found in the cytoplasm. It carries out the reaction UDP-N-acetyl-alpha-D-muramate + L-alanine + ATP = UDP-N-acetyl-alpha-D-muramoyl-L-alanine + ADP + phosphate + H(+). The protein operates within cell wall biogenesis; peptidoglycan biosynthesis. Its function is as follows. Cell wall formation. The sequence is that of UDP-N-acetylmuramate--L-alanine ligase from Streptococcus sanguinis (strain SK36).